We begin with the raw amino-acid sequence, 189 residues long: Holliday junction branch migration complex subunit RuvA (189 aa).

Residues 1–62 (MIVALKGNIE…EEAWSLYGFA (62 aa)) form a domain I region. Positions 63–138 (EEAEKRVFDT…FSLSLQEGSK (76 aa)) are domain II. Positions 138–139 (KA) are flexible linker. The tract at residues 140 to 189 (STPPVFEESRLALESLGFKSELIAKALQNIQATTTQEIIKEALKKLQTLR) is domain III.

Belongs to the RuvA family. Homotetramer. Forms an RuvA(8)-RuvB(12)-Holliday junction (HJ) complex. HJ DNA is sandwiched between 2 RuvA tetramers; dsDNA enters through RuvA and exits via RuvB. An RuvB hexamer assembles on each DNA strand where it exits the tetramer. Each RuvB hexamer is contacted by two RuvA subunits (via domain III) on 2 adjacent RuvB subunits; this complex drives branch migration. In the full resolvosome a probable DNA-RuvA(4)-RuvB(12)-RuvC(2) complex forms which resolves the HJ.

It is found in the cytoplasm. In terms of biological role, the RuvA-RuvB-RuvC complex processes Holliday junction (HJ) DNA during genetic recombination and DNA repair, while the RuvA-RuvB complex plays an important role in the rescue of blocked DNA replication forks via replication fork reversal (RFR). RuvA specifically binds to HJ cruciform DNA, conferring on it an open structure. The RuvB hexamer acts as an ATP-dependent pump, pulling dsDNA into and through the RuvAB complex. HJ branch migration allows RuvC to scan DNA until it finds its consensus sequence, where it cleaves and resolves the cruciform DNA. The polypeptide is Holliday junction branch migration complex subunit RuvA (Wolinella succinogenes (strain ATCC 29543 / DSM 1740 / CCUG 13145 / JCM 31913 / LMG 7466 / NCTC 11488 / FDC 602W) (Vibrio succinogenes)).